The sequence spans 740 residues: Ethylene receptor 1 (740 aa).

A run of 3 helical transmembrane segments spans residues 23–43, 53–73, and 95–115; these read ISDF…IYFV, WVLV…LINL, and AAVS…LLSV. The Cu cation site is built by Cys-65 and His-69. The GAF domain occupies 158–307; that stretch reads DRHTILKTTL…VVADQVAVAL (150 aa). In terms of domain architecture, Histidine kinase spans 350–587; it reads VMNHEMRTPM…TVTFVVKLGI (238 aa). His-353 bears the Phosphohistidine; by autocatalysis mark. Residues 615–732 enclose the Response regulatory domain; that stretch reads KVLLMDENGI…KMRNVLSKLL (118 aa). Position 663 is a 4-aspartylphosphate (Asp-663).

Belongs to the ethylene receptor family. In terms of assembly, homodimer; disulfide-linked. Requires Cu cation as cofactor. Post-translationally, activation probably requires a transfer of a phosphate group between a His in the transmitter domain and an Asp of the receiver domain.

Its subcellular location is the endoplasmic reticulum membrane. The catalysed reaction is ATP + protein L-histidine = ADP + protein N-phospho-L-histidine.. May act early in the ethylene signal transduction pathway, possibly as an ethylene receptor, or as a regulator of the pathway. This chain is Ethylene receptor 1 (ETR1), found in Pelargonium hortorum (Common geranium).